The primary structure comprises 279 residues: Energy-coupling factor transporter ATP-binding protein EcfA1 (279 aa).

One can recognise an ABC transporter domain in the interval 5 to 240 (IELKKVTFNY…GDELLQLGLD (236 aa)). 40–47 (GHNGSGKS) lines the ATP pocket.

Belongs to the ABC transporter superfamily. Energy-coupling factor EcfA family. In terms of assembly, forms a stable energy-coupling factor (ECF) transporter complex composed of 2 membrane-embedded substrate-binding proteins (S component), 2 ATP-binding proteins (A component) and 2 transmembrane proteins (T component).

The protein resides in the cell membrane. In terms of biological role, ATP-binding (A) component of a common energy-coupling factor (ECF) ABC-transporter complex. Unlike classic ABC transporters this ECF transporter provides the energy necessary to transport a number of different substrates. The protein is Energy-coupling factor transporter ATP-binding protein EcfA1 of Streptococcus pyogenes serotype M28 (strain MGAS6180).